The primary structure comprises 77 residues: Large ribosomal subunit protein uL29 (77 aa).

Belongs to the universal ribosomal protein uL29 family.

This is Large ribosomal subunit protein uL29 (rpmC) from Mycobacterium bovis (strain ATCC BAA-935 / AF2122/97).